We begin with the raw amino-acid sequence, 1344 residues long: Protein stu1 (1344 aa).

The stretch at 93 to 131 is one HEAT 1 repeat; it reads LYPLLVERLGDHKERIRAQAAQSFTDMWLAAPEEVEQCV. Residues 265–292 form a disordered region; it reads HRPVSRAETQASRSVSRLDTHQRPASRM. The HEAT 2 repeat unit spans residues 508-544; it reads VTFTTRILQHVSGACQDKNVQLRLFAAGWLKTLIQKQ. Disordered regions lie at residues 606-637, 651-847, 914-945, 984-1004, and 1031-1054; these read RSLL…ANGT, AAQK…STPR, LTEN…ESVP, PVTH…LSSS, and SLPH…PSQR. Composition is skewed to polar residues over residues 691 to 705 and 735 to 747; these read VRTV…SLSS and ATDS…NQID. Low complexity predominate over residues 748-769; the sequence is GSPSAAKSKSSTPSLKSVSSTG. Composition is skewed to polar residues over residues 828-847 and 914-942; these read FSVT…STPR and LTEN…NQDE. Positions 995–1004 are enriched in low complexity; sequence SSKPSGLSSS.

The protein belongs to the CLASP family. As to quaternary structure, interacts with microtubules.

The protein localises to the cytoplasm. The protein resides in the cytoskeleton. It is found in the nucleus. Its subcellular location is the spindle. Its function is as follows. Microtubule binding protein that promotes the stabilization of dynamic microtubules. Required for mitotic spindle formation. The chain is Protein stu1 (stu1) from Aspergillus fumigatus (strain ATCC MYA-4609 / CBS 101355 / FGSC A1100 / Af293) (Neosartorya fumigata).